We begin with the raw amino-acid sequence, 389 residues long: Probable nitrate transporter NarT (389 aa).

12 helical membrane passes run 14–34 (TLSL…MPFI), 45–65 (ISII…PFGY), 69–89 (IVGA…PIFF), 97–117 (GMLM…SVGV), 139–159 (GNIG…IIGW), 161–181 (TTVR…FIFG), 211–231 (WYFI…NYLV), 246–266 (GVFI…GDKF), 268–288 (AVKV…ILGI), 294–314 (LFTV…GLIF), 331–351 (IVSM…TYVA), and 353–373 (LTGS…IALF).

Belongs to the major facilitator superfamily. Nitrate/nitrite porter (TC 2.A.1.8) family.

It localises to the cell membrane. Functionally, probably required for nitrate uptake under anoxic conditions. Also possibly involved in excretion of nitrite produced by the dissimilatory reduction of nitrate. The sequence is that of Probable nitrate transporter NarT (narT) from Staphylococcus aureus (strain MRSA252).